A 363-amino-acid polypeptide reads, in one-letter code: Putative glutamate--cysteine ligase 2-3 (363 aa).

The protein belongs to the glutamate--cysteine ligase type 2 family. YbdK subfamily.

It catalyses the reaction L-cysteine + L-glutamate + ATP = gamma-L-glutamyl-L-cysteine + ADP + phosphate + H(+). ATP-dependent carboxylate-amine ligase which exhibits weak glutamate--cysteine ligase activity. In Rubrobacter xylanophilus (strain DSM 9941 / JCM 11954 / NBRC 16129 / PRD-1), this protein is Putative glutamate--cysteine ligase 2-3.